The chain runs to 260 residues: Acetylglutamate kinase (260 aa).

Residues 46-47 (GG), R68, and N160 contribute to the substrate site.

This sequence belongs to the acetylglutamate kinase family. ArgB subfamily.

Its subcellular location is the cytoplasm. It carries out the reaction N-acetyl-L-glutamate + ATP = N-acetyl-L-glutamyl 5-phosphate + ADP. It participates in amino-acid biosynthesis; L-arginine biosynthesis; N(2)-acetyl-L-ornithine from L-glutamate: step 2/4. In terms of biological role, catalyzes the ATP-dependent phosphorylation of N-acetyl-L-glutamate. In Shewanella putrefaciens (strain CN-32 / ATCC BAA-453), this protein is Acetylglutamate kinase.